We begin with the raw amino-acid sequence, 429 residues long: Chaperone SurA (429 aa).

Positions 1-18 (MFKRIALVCALFSGVCFA) are cleaved as a signal peptide. PpiC domains are found at residues 170-271 (NLTY…KLVA) and 281-380 (ITQT…EVIA).

The protein localises to the periplasm. The enzyme catalyses [protein]-peptidylproline (omega=180) = [protein]-peptidylproline (omega=0). Its function is as follows. Chaperone involved in the correct folding and assembly of outer membrane proteins. Recognizes specific patterns of aromatic residues and the orientation of their side chains, which are found more frequently in integral outer membrane proteins. May act in both early periplasmic and late outer membrane-associated steps of protein maturation. The sequence is that of Chaperone SurA from Legionella pneumophila subsp. pneumophila (strain Philadelphia 1 / ATCC 33152 / DSM 7513).